The chain runs to 350 residues: GTPase Obg (350 aa).

One can recognise an Obg domain in the interval 1–159 (MKLVDEAEIE…RTLKLELKLL (159 aa)). A disordered region spans residues 126–147 (GNMHFKSSTNRSPRQALPGEPG). One can recognise an OBG-type G domain in the interval 160–337 (ADVGLLGFPN…IMSRIMAFFD (178 aa)). GTP is bound by residues 166-173 (GFPNAGKS), 191-195 (FTTLY), 213-216 (DIPG), 287-290 (NKAD), and 318-320 (SAL). Residues serine 173 and threonine 193 each coordinate Mg(2+).

Belongs to the TRAFAC class OBG-HflX-like GTPase superfamily. OBG GTPase family. As to quaternary structure, monomer. The cofactor is Mg(2+).

Its subcellular location is the cytoplasm. An essential GTPase which binds GTP, GDP and possibly (p)ppGpp with moderate affinity, with high nucleotide exchange rates and a fairly low GTP hydrolysis rate. Plays a role in control of the cell cycle, stress response, ribosome biogenesis and in those bacteria that undergo differentiation, in morphogenesis control. The protein is GTPase Obg of Stenotrophomonas maltophilia (strain K279a).